The sequence spans 265 residues: 14-3-3-like protein GF14-D (265 aa).

Positions 244 to 265 are disordered; the sequence is DANDDGGDEIKEAAAPKEPGDQ. A compositionally biased stretch (basic and acidic residues) spans 251–265; sequence DEIKEAAAPKEPGDQ.

This sequence belongs to the 14-3-3 family. In terms of assembly, interacts with BZR1. Interacts with ABI5.

Its function is as follows. Is associated with a DNA binding complex that binds to the G box, a well-characterized cis-acting DNA regulatory element found in plant genes. This is 14-3-3-like protein GF14-D (GF14D) from Oryza sativa subsp. japonica (Rice).